A 469-amino-acid polypeptide reads, in one-letter code: Argininosuccinate lyase (469 aa).

Belongs to the lyase 1 family. Argininosuccinate lyase subfamily.

It is found in the cytoplasm. The catalysed reaction is 2-(N(omega)-L-arginino)succinate = fumarate + L-arginine. The protein operates within amino-acid biosynthesis; L-arginine biosynthesis; L-arginine from L-ornithine and carbamoyl phosphate: step 3/3. The chain is Argininosuccinate lyase from Burkholderia orbicola (strain MC0-3).